The sequence spans 146 residues: Large ribosomal subunit protein uL15 (146 aa).

Basic and acidic residues predominate over residues Met-1–Arg-13. Residues Met-1–Gln-54 form a disordered region. Over residues Thr-23–Gln-35 the composition is skewed to gly residues.

The protein belongs to the universal ribosomal protein uL15 family. In terms of assembly, part of the 50S ribosomal subunit.

Its function is as follows. Binds to the 23S rRNA. In Lactobacillus johnsonii (strain CNCM I-12250 / La1 / NCC 533), this protein is Large ribosomal subunit protein uL15.